The primary structure comprises 160 residues: Large ribosomal subunit protein uL22c (160 aa).

It belongs to the universal ribosomal protein uL22 family. As to quaternary structure, part of the 50S ribosomal subunit.

It is found in the plastid. The protein resides in the chloroplast. Functionally, this protein binds specifically to 23S rRNA. Its function is as follows. The globular domain of the protein is located near the polypeptide exit tunnel on the outside of the subunit, while an extended beta-hairpin is found that lines the wall of the exit tunnel in the center of the 70S ribosome. This Arabidopsis thaliana (Mouse-ear cress) protein is Large ribosomal subunit protein uL22c (rpl22).